Reading from the N-terminus, the 178-residue chain is uncharacterized protein (178 aa).

Its subcellular location is the mitochondrion. This is an uncharacterized protein from Paramecium tetraurelia.